We begin with the raw amino-acid sequence, 109 residues long: Photosystem II reaction center Psb28 protein (109 aa).

Belongs to the Psb28 family. Part of the photosystem II complex.

Its subcellular location is the plastid. It is found in the chloroplast thylakoid membrane. This chain is Photosystem II reaction center Psb28 protein, found in Cyanidioschyzon merolae (strain NIES-3377 / 10D) (Unicellular red alga).